The chain runs to 346 residues: Protease inhibitor Egf1.5b (346 aa).

Positions 1-28 are cleaved as a signal peptide; the sequence is MYIDTGIMSNNIFLFAFFALVGLTRIEA. The 53-residue stretch at 52-104 folds into the TIL domain; the sequence is CRENEHYNSTRIECEDECNDRNNKLCYRFQQFCWCNEGYIRNSSHICVKLEDC.

Belongs to the polydnaviridae EGF-like motif protein family. Interacts with host PAP1, PAP3 and SPH2.

Functionally, counteracts the host humoral immune response by inhibiting the processing and the amidolytic activity of host PAP1 and PAP3. Thereby, melanization of host hemolymph, normally producing several reactive intermediates toxic for viruses, is deregulated and proper immune response cannot occur. In Microplitis demolitor (Parasitoid wasp), this protein is Protease inhibitor Egf1.5b (O5).